The primary structure comprises 1216 residues: ATP-dependent helicase/nuclease subunit A (1216 aa).

The UvrD-like helicase ATP-binding domain maps to 26 to 488 (QKKTAEQIEA…ILLKENFRSS (463 aa)). An ATP-binding site is contributed by 47-54 (ASAGSGKT). The UvrD-like helicase C-terminal domain maps to 515 to 802 (KHQLVFANTK…ELMTIHKSKG (288 aa)).

Belongs to the helicase family. AddA subfamily. In terms of assembly, heterodimer of AddA and AddB/RexB. Mg(2+) serves as cofactor.

The catalysed reaction is Couples ATP hydrolysis with the unwinding of duplex DNA by translocating in the 3'-5' direction.. It catalyses the reaction ATP + H2O = ADP + phosphate + H(+). The heterodimer acts as both an ATP-dependent DNA helicase and an ATP-dependent, dual-direction single-stranded exonuclease. Recognizes the chi site generating a DNA molecule suitable for the initiation of homologous recombination. The AddA nuclease domain is required for chi fragment generation; this subunit has the helicase and 3' -&gt; 5' nuclease activities. The polypeptide is ATP-dependent helicase/nuclease subunit A (Streptococcus pneumoniae (strain CGSP14)).